The sequence spans 237 residues: Phosphoribosylaminoimidazole-succinocarboxamide synthase (237 aa).

It belongs to the SAICAR synthetase family.

The catalysed reaction is 5-amino-1-(5-phospho-D-ribosyl)imidazole-4-carboxylate + L-aspartate + ATP = (2S)-2-[5-amino-1-(5-phospho-beta-D-ribosyl)imidazole-4-carboxamido]succinate + ADP + phosphate + 2 H(+). The protein operates within purine metabolism; IMP biosynthesis via de novo pathway; 5-amino-1-(5-phospho-D-ribosyl)imidazole-4-carboxamide from 5-amino-1-(5-phospho-D-ribosyl)imidazole-4-carboxylate: step 1/2. This is Phosphoribosylaminoimidazole-succinocarboxamide synthase from Yersinia enterocolitica serotype O:8 / biotype 1B (strain NCTC 13174 / 8081).